A 702-amino-acid polypeptide reads, in one-letter code: Ribosomal RNA large subunit methyltransferase K/L (702 aa).

One can recognise a THUMP domain in the interval 43–154 (LIYQSLMWSR…KETASIALDL (112 aa)).

Belongs to the methyltransferase superfamily. RlmKL family.

Its subcellular location is the cytoplasm. It carries out the reaction guanosine(2445) in 23S rRNA + S-adenosyl-L-methionine = N(2)-methylguanosine(2445) in 23S rRNA + S-adenosyl-L-homocysteine + H(+). The enzyme catalyses guanosine(2069) in 23S rRNA + S-adenosyl-L-methionine = N(2)-methylguanosine(2069) in 23S rRNA + S-adenosyl-L-homocysteine + H(+). Functionally, specifically methylates the guanine in position 2445 (m2G2445) and the guanine in position 2069 (m7G2069) of 23S rRNA. The protein is Ribosomal RNA large subunit methyltransferase K/L of Salmonella paratyphi B (strain ATCC BAA-1250 / SPB7).